Here is a 249-residue protein sequence, read N- to C-terminus: Ribonuclease HII (249 aa).

The region spanning 30–221 is the RNase H type-2 domain; sequence GPVAGVDEVG…VRRLVMDGEP (192 aa). Residues D36, E37, and D130 each contribute to the a divalent metal cation site.

It belongs to the RNase HII family. Requires Mn(2+) as cofactor. Mg(2+) serves as cofactor.

The protein resides in the cytoplasm. It catalyses the reaction Endonucleolytic cleavage to 5'-phosphomonoester.. Endonuclease that specifically degrades the RNA of RNA-DNA hybrids. In Mycolicibacterium vanbaalenii (strain DSM 7251 / JCM 13017 / BCRC 16820 / KCTC 9966 / NRRL B-24157 / PYR-1) (Mycobacterium vanbaalenii), this protein is Ribonuclease HII.